A 258-amino-acid chain; its full sequence is Tryptophan synthase alpha chain (258 aa).

Active-site proton acceptor residues include E47 and D58.

Belongs to the TrpA family. Tetramer of two alpha and two beta chains.

It catalyses the reaction (1S,2R)-1-C-(indol-3-yl)glycerol 3-phosphate + L-serine = D-glyceraldehyde 3-phosphate + L-tryptophan + H2O. It participates in amino-acid biosynthesis; L-tryptophan biosynthesis; L-tryptophan from chorismate: step 5/5. In terms of biological role, the alpha subunit is responsible for the aldol cleavage of indoleglycerol phosphate to indole and glyceraldehyde 3-phosphate. The chain is Tryptophan synthase alpha chain from Bacillus cereus (strain ATCC 14579 / DSM 31 / CCUG 7414 / JCM 2152 / NBRC 15305 / NCIMB 9373 / NCTC 2599 / NRRL B-3711).